The sequence spans 68 residues: Large ribosomal subunit protein uL29 (68 aa).

Belongs to the universal ribosomal protein uL29 family.

This Chlorobaculum tepidum (strain ATCC 49652 / DSM 12025 / NBRC 103806 / TLS) (Chlorobium tepidum) protein is Large ribosomal subunit protein uL29.